Reading from the N-terminus, the 736-residue chain is MAYIAVPAVVDSRSSEAIGLLESFGVDAGADANDVSYQDHDYVLDQLQYMLDGYEAGDVIDALVHKNWLHHSVYCLLPPKSQLLEYWKSNPSVIPDNVDRRLRKRLMLKKDLRKDDEYNQLARAFKISDVYAPLISSTTSPMTMIQNLNQGEIVYTTTDRVIGARILLYAPRKYYASTLSFTMTKCIIPFGKEVGRVPHSRFNVGTFPSIATPKCFVMSGVDIESIPNEFIKLFYQRVKSVHANILNDISPQIVSDMINRKRLRVHTPSDRRAAQLMHLPYHVKRGASHVDVYKVDVVDVLLEVVDVADGLRNVSRKLTMHTVPVCILEMLGIEIADYCIRQEDGMFTDWFLLLTMLSDGLTDRRTHCQYLINPSSVPPDVILNISITGFINRHTIDVMPDIYDFVKPIGAVLPKGSFKSTIMRVLDSISILGVQIMPRAHVVDSDEVGEQMEPTFEHAVMEIYKGIAGVDSLDDLIKWVLNSDLIPHDDRLGQLFQAFLPLAKDLLAPMARKFYDNSMSEGRLLTFAHADSELLNANYFGHLLRLKIPYITEVNLMIRKNREGGELFQLVLSYLYKMYATSAQPKWFGSLLRLLICPWLHMEKLIGEADPASTSAEIGWHIPREQLMQDGWCGCEDGFIPYVSIRAPRLVMEELMEKNWGQYHAQVIVTDQLVVGEPRRVSAKAVIKGNHLPVKLVSRFACFTLTAKYEMRLSCGHSTGRGAAYNARLAFRSDLA.

It belongs to the orthoreovirus mu-2 protein family. In terms of assembly, interacts with protein mu-NS; in viral inclusions. Interacts with polymerase lambda-3; this interaction stimulates the ATPase activity of mu-2. Requires a divalent metal cation as cofactor.

The protein resides in the virion. It localises to the host cytoplasm. The protein localises to the host cytoskeleton. In terms of biological role, minor inner capsid (core) component. Displays NTPase and RNA 5'-triphosphatase (RTPase) activities. ATP is the preferred substrate for hydrolysis. May function as a cofactor of polymerase lambda-3. Associates with microtubules and plays a role in the formation, structural organization and morphology of viral inclusions, where the assembly of cores and the replication of viral RNA occur. Together with mu-NS, recruits the other core proteins to these inclusions. This Mammalia (T1L) protein is Microtubule-associated protein mu-2 (M1).